The following is a 120-amino-acid chain: Chaperonin GroEL (120 aa).

Asp-23 to Thr-27 contacts ATP.

This sequence belongs to the chaperonin (HSP60) family. Forms a cylinder of 14 subunits composed of two heptameric rings stacked back-to-back. Interacts with the co-chaperonin GroES.

Its subcellular location is the cytoplasm. The catalysed reaction is ATP + H2O + a folded polypeptide = ADP + phosphate + an unfolded polypeptide.. In terms of biological role, together with its co-chaperonin GroES, plays an essential role in assisting protein folding. The GroEL-GroES system forms a nano-cage that allows encapsulation of the non-native substrate proteins and provides a physical environment optimized to promote and accelerate protein folding. The sequence is that of Chaperonin GroEL from Mycobacterium xenopi.